The primary structure comprises 155 residues: SsrA-binding protein (155 aa).

It belongs to the SmpB family.

The protein localises to the cytoplasm. Required for rescue of stalled ribosomes mediated by trans-translation. Binds to transfer-messenger RNA (tmRNA), required for stable association of tmRNA with ribosomes. tmRNA and SmpB together mimic tRNA shape, replacing the anticodon stem-loop with SmpB. tmRNA is encoded by the ssrA gene; the 2 termini fold to resemble tRNA(Ala) and it encodes a 'tag peptide', a short internal open reading frame. During trans-translation Ala-aminoacylated tmRNA acts like a tRNA, entering the A-site of stalled ribosomes, displacing the stalled mRNA. The ribosome then switches to translate the ORF on the tmRNA; the nascent peptide is terminated with the 'tag peptide' encoded by the tmRNA and targeted for degradation. The ribosome is freed to recommence translation, which seems to be the essential function of trans-translation. The polypeptide is SsrA-binding protein (Streptococcus pyogenes serotype M5 (strain Manfredo)).